A 61-amino-acid polypeptide reads, in one-letter code: Small ribosomal subunit protein uS14B (61 aa).

Cys24, Cys27, Cys40, and Cys43 together coordinate Zn(2+).

It belongs to the universal ribosomal protein uS14 family. Zinc-binding uS14 subfamily. Part of the 30S ribosomal subunit. Contacts proteins S3 and S10. Zn(2+) serves as cofactor.

Its function is as follows. Binds 16S rRNA, required for the assembly of 30S particles and may also be responsible for determining the conformation of the 16S rRNA at the A site. The polypeptide is Small ribosomal subunit protein uS14B (Streptomyces avermitilis (strain ATCC 31267 / DSM 46492 / JCM 5070 / NBRC 14893 / NCIMB 12804 / NRRL 8165 / MA-4680)).